Reading from the N-terminus, the 66-residue chain is DNA gyrase inhibitor YacG (66 aa).

The Zn(2+) site is built by cysteine 9, cysteine 12, cysteine 28, and cysteine 32.

This sequence belongs to the DNA gyrase inhibitor YacG family. As to quaternary structure, interacts with GyrB. Zn(2+) serves as cofactor.

In terms of biological role, inhibits all the catalytic activities of DNA gyrase by preventing its interaction with DNA. Acts by binding directly to the C-terminal domain of GyrB, which probably disrupts DNA binding by the gyrase. The polypeptide is DNA gyrase inhibitor YacG (Pseudomonas fluorescens (strain Pf0-1)).